Consider the following 658-residue polypeptide: Exoribonuclease 2 (658 aa).

The region spanning 189–530 (REDLTSLYFT…VNHRLIKQVL (342 aa)) is the RNB domain. The 83-residue stretch at 576–658 (AVEFDCEIAD…ETRSIVGNII (83 aa)) folds into the S1 motif domain.

This sequence belongs to the RNR ribonuclease family. RNase II subfamily.

It localises to the cytoplasm. The catalysed reaction is Exonucleolytic cleavage in the 3'- to 5'-direction to yield nucleoside 5'-phosphates.. Involved in mRNA degradation. Hydrolyzes single-stranded polyribonucleotides processively in the 3' to 5' direction. The chain is Exoribonuclease 2 from Actinobacillus pleuropneumoniae serotype 3 (strain JL03).